The chain runs to 528 residues: GMP synthase [glutamine-hydrolyzing] (528 aa).

Positions 13–204 constitute a Glutamine amidotransferase type-1 domain; the sequence is AIVILDFGSQ…VYHICGCEPD (192 aa). Cys-90 serves as the catalytic Nucleophile. Active-site residues include His-178 and Glu-180. A GMPS ATP-PPase domain is found at 205–403; it reads WTTEAFIDEA…LGLPEEIVSR (199 aa). ATP is bound at residue 232-238; sequence SGGVDSS.

As to quaternary structure, homodimer.

It catalyses the reaction XMP + L-glutamine + ATP + H2O = GMP + L-glutamate + AMP + diphosphate + 2 H(+). Its pathway is purine metabolism; GMP biosynthesis; GMP from XMP (L-Gln route): step 1/1. Functionally, catalyzes the synthesis of GMP from XMP. This chain is GMP synthase [glutamine-hydrolyzing], found in Synechococcus sp. (strain CC9311).